The sequence spans 523 residues: Ribonuclease Y (523 aa).

Residues 18–38 (WSLTVALVIGGALGFLVVWAF) form a helical membrane-spanning segment. Positions 213 to 276 (TSTIVSLPNE…EVARGALEAL (64 aa)) constitute a KH domain. The region spanning 339 to 432 (VLDHSVETAS…VILADTISAT (94 aa)) is the HD domain.

This sequence belongs to the RNase Y family.

Its subcellular location is the cell membrane. In terms of biological role, endoribonuclease that initiates mRNA decay. This is Ribonuclease Y from Opitutus terrae (strain DSM 11246 / JCM 15787 / PB90-1).